The sequence spans 530 residues: MMMASKDATSSVDGASGAGQLVPEVNASDPLAMDPVAGSSTAVATAGQVNPIDPWIINNFVQAPQGEFTISPNNTPGDVLFDLSLGPHLNPFLLHLSQMYNGWVGNMRVRIMLAGNAFTAGKIIVSCIPPGFGSHNLTIAQATLFPHVIADVRTLDPIEVPLEDVRNVLFHNNDRNQQTMRLVCMLYTPLRTGGGTGDSFVVAGRVMTCPSPDFNFLFLVPPTVEQKTRPFTLPNLPLSSLSNSRAPLPISSMGISPDNVQSVQFQNGRCTLDGRLVGTTPVSLSHVAKIRGTSNGTVINLTELDGTPFHPFEGPAPIGFPDLGGCDWHINMTQFGHSSQTQYDVDTTPDTFVPHLGSIQANGIGSGNYVGVLSWISPPSHPSGSQVDLWKIPNYGSSITEATHLAPSVYPPGFGEVLVFFMSKMPGPGAYNLPCLLPQEYISHLASEQAPTVGEAALLHYVDPDTGRNLGEFKAYPDGFLTCVPNGASSGPQQLPINGVFVFVSWVSRFYQLKPVGTASSARGRLGLRR.

The disordered stretch occupies residues 1-20 (MMMASKDATSSVDGASGAGQ). The tract at residues 1-225 (MMMASKDATS…FLFLVPPTVE (225 aa)) is shell domain. Residues 226-278 (QKTRPFTLPNLPLSSLSNSRAPLPISSMGISPDNVQSVQFQNGRCTLDGRLVG) form a P1 sub-domain 1 region. The segment at 226–530 (QKTRPFTLPN…SARGRLGLRR (305 aa)) is protruding domain. The P2 sub-domain stretch occupies residues 279–405 (TTPVSLSHVA…GSSITEATHL (127 aa)). Residues 406-530 (APSVYPPGFG…SARGRLGLRR (125 aa)) are P1 sub-domain 2. The interval 523–530 (RGRLGLRR) is plays a role in binding to host histo-blood group structures antigens and in the formation of P-particles.

It belongs to the caliciviridae capsid protein family. Homodimer. Homomultimer. Interacts with the minor capsid protein VP2. Interacts (via C-terminus) with host type I histo-blood group structures antigens at the surface of target cells. Post-translationally, may be cleaved by host protease to generate soluble capsid protein. Assembled capsid cannot be cleaved.

Its subcellular location is the virion. The protein resides in the host cytoplasm. Its function is as follows. Capsid protein self assembles to form an icosahedral capsid with a T=3 symmetry, about 38 nm in diameter, and consisting of 180 capsid proteins. A smaller form of capsid with a diameter of 23 nm might be capsid proteins assembled as icosahedron with T=1 symmetry. The capsid encapsulates the genomic RNA and is decorated with VP2 proteins. Attaches virion to target cells by binding histo-blood group antigens (HBGAs) present on gastroduodenal epithelial cells. Functionally, the soluble capsid protein may play a role in viral immunoevasion. This Norovirus (strain Human/NoV/United States/Norwalk/1968/GI) (Hu/NV/NV/1968/US) protein is Capsid protein VP1.